The chain runs to 393 residues: METFLFTSESVNEGHPDKLCDQISDAVLDACLEQDPDSKVACETCTKTNMVMVFGEITTKATIDYEKIVRDTCRSIGFISDDVGLDADKCKVLVNIEQQSPDIAQGVHGHFTKRPEDIGAGDQGHMFGYATDETPELMPLSHVLATKIGARLTEVRKNGTCRWLRPDGKTQVTVEYYNDNGAMVPVRVHTVLISTQHDETVTNDEIARDLKEHVIKPIIPEKYLDDKTIFHLNPSGRFVIGGPHGDAGLTGRKIIIDTYGGWGAHGGGAFSGKDPTKVDRSGAYIVRQAAKSVVANGMARRALVQVSYAIGVPEPLSVFVDTYGTGLIPDKEILKIVKETFDFRPGMMTINLDLKRGGNGRFQKTAAYGHFGRDDPDFTWEVVKPLKWDKPQA.

Glutamate 9 provides a ligand contact to Mg(2+). Histidine 15 lines the ATP pocket. Residue glutamate 43 coordinates K(+). L-methionine is bound by residues glutamate 56 and glutamine 99. ATP-binding positions include 167–169 (DGK), 235–238 (SGRF), aspartate 246, 252–253 (RK), alanine 269, lysine 273, and lysine 277. Aspartate 246 is a binding site for L-methionine. Lysine 277 provides a ligand contact to L-methionine.

This sequence belongs to the AdoMet synthase family. As to quaternary structure, homotetramer. Interacts with GRF3. The cofactor is Mn(2+). Mg(2+) is required as a cofactor. Requires Co(2+) as cofactor. K(+) serves as cofactor. As to expression, highly expressed in stems and roots. Detected in trichomes (at the protein level).

The protein localises to the cytoplasm. The catalysed reaction is L-methionine + ATP + H2O = S-adenosyl-L-methionine + phosphate + diphosphate. The protein operates within amino-acid biosynthesis; S-adenosyl-L-methionine biosynthesis; S-adenosyl-L-methionine from L-methionine: step 1/1. Inhibited by 5,5'-dithiobis-2-nitrobenzoic acid (DTNB) and N-ethylmaleimide (NEM) (in vitro). Its function is as follows. Catalyzes the formation of S-adenosylmethionine from methionine and ATP. The reaction comprises two steps that are both catalyzed by the same enzyme: formation of S-adenosylmethionine (AdoMet) and triphosphate, and subsequent hydrolysis of the triphosphate. The protein is S-adenosylmethionine synthase 2 (SAM2) of Arabidopsis thaliana (Mouse-ear cress).